Here is a 372-residue protein sequence, read N- to C-terminus: Queuine tRNA-ribosyltransferase (372 aa).

The active-site Proton acceptor is D93. Residues D93–F97, D147, Q190, and G217 contribute to the substrate site. The interval G248 to C254 is RNA binding. Catalysis depends on D267, which acts as the Nucleophile. The interval T272–R276 is RNA binding; important for wobble base 34 recognition. Positions 305, 307, 310, and 336 each coordinate Zn(2+).

This sequence belongs to the queuine tRNA-ribosyltransferase family. As to quaternary structure, homodimer. Within each dimer, one monomer is responsible for RNA recognition and catalysis, while the other monomer binds to the replacement base PreQ1. Zn(2+) serves as cofactor.

It carries out the reaction 7-aminomethyl-7-carbaguanine + guanosine(34) in tRNA = 7-aminomethyl-7-carbaguanosine(34) in tRNA + guanine. It functions in the pathway tRNA modification; tRNA-queuosine biosynthesis. Catalyzes the base-exchange of a guanine (G) residue with the queuine precursor 7-aminomethyl-7-deazaguanine (PreQ1) at position 34 (anticodon wobble position) in tRNAs with GU(N) anticodons (tRNA-Asp, -Asn, -His and -Tyr). Catalysis occurs through a double-displacement mechanism. The nucleophile active site attacks the C1' of nucleotide 34 to detach the guanine base from the RNA, forming a covalent enzyme-RNA intermediate. The proton acceptor active site deprotonates the incoming PreQ1, allowing a nucleophilic attack on the C1' of the ribose to form the product. After dissociation, two additional enzymatic reactions on the tRNA convert PreQ1 to queuine (Q), resulting in the hypermodified nucleoside queuosine (7-(((4,5-cis-dihydroxy-2-cyclopenten-1-yl)amino)methyl)-7-deazaguanosine). This is Queuine tRNA-ribosyltransferase from Desulforudis audaxviator (strain MP104C).